The chain runs to 200 residues: MALTMLLLLVAAALTLIETRAGQHSLQYFHTAVSRPGLGEPWFISVGYVDDTQFVRFDSDAENPRMEPRARWMEQEGPEYWERETQIAKGHEQSFRGSLRTAQSYYNQSKGGSHTLQWMYGCDMGSDGRLLRGYLQFAYEGRDYIALNEDLKTWTAVDMAAQITRRKWEQAGIAEKDQAYLEGTCMQSLRRYLELGKETL.

A signal peptide spans 1-21; the sequence is MALTMLLLLVAAALTLIETRA. Residues 22-111 form an alpha-1 region; sequence GQHSLQYFHT…AQSYYNQSKG (90 aa). At 22 to 200 the chain is on the extracellular side; that stretch reads GQHSLQYFHT…RYLELGKETL (179 aa). N-linked (GlcNAc...) asparagine glycosylation occurs at Asn107. Residues 112-200 form an alpha-2 region; it reads GSHTLQWMYG…RYLELGKETL (89 aa). Cys122 and Cys185 are joined by a disulfide.

The protein belongs to the MHC class I family. As to quaternary structure, heterodimer of an alpha chain and a beta chain (beta-2-microglobulin).

It localises to the membrane. Functionally, involved in the presentation of foreign antigens to the immune system. In Mus musculus (Mouse), this protein is H-2 class I histocompatibility antigen, Q9 alpha chain (H2-Q9).